Consider the following 171-residue polypeptide: 3-hydroxydecanoyl-[acyl-carrier-protein] dehydratase (171 aa).

Residue His-70 is part of the active site.

Belongs to the thioester dehydratase family. FabA subfamily. As to quaternary structure, homodimer.

The protein localises to the cytoplasm. The enzyme catalyses a (3R)-hydroxyacyl-[ACP] = a (2E)-enoyl-[ACP] + H2O. It catalyses the reaction (3R)-hydroxydecanoyl-[ACP] = (2E)-decenoyl-[ACP] + H2O. The catalysed reaction is (2E)-decenoyl-[ACP] = (3Z)-decenoyl-[ACP]. It participates in lipid metabolism; fatty acid biosynthesis. Necessary for the introduction of cis unsaturation into fatty acids. Catalyzes the dehydration of (3R)-3-hydroxydecanoyl-ACP to E-(2)-decenoyl-ACP and then its isomerization to Z-(3)-decenoyl-ACP. Can catalyze the dehydratase reaction for beta-hydroxyacyl-ACPs with saturated chain lengths up to 16:0, being most active on intermediate chain length. This is 3-hydroxydecanoyl-[acyl-carrier-protein] dehydratase from Histophilus somni (strain 129Pt) (Haemophilus somnus).